A 1270-amino-acid polypeptide reads, in one-letter code: Breakpoint cluster region protein (1270 aa).

A coiled-coil region spans residues Val-28 to Arg-55. Disordered regions lie at residues Lys-67–Ala-173, Ile-201–Asp-249, Lys-295–Gln-396, and Thr-412–Thr-484. Over residues Gly-126–Pro-139 the composition is skewed to low complexity. Phosphoserine is present on residues Ser-216 and Ser-237. Residue Tyr-247 is modified to Phosphotyrosine. Composition is skewed to low complexity over residues Ser-348–Ser-358 and Ser-371–Ser-384. Ser-358, Ser-379, and Ser-384 each carry phosphoserine. The residue at position 387 (Thr-387) is a Phosphothreonine. Phosphoserine is present on residues Ser-461 and Ser-465. An Omega-N-methylarginine modification is found at Arg-473. Phosphoserine occurs at positions 475 and 487. Residues Met-497–Glu-690 form the DH domain. Phosphotyrosine is present on Tyr-553. Thr-640 carries the post-translational modification Phosphothreonine. At Tyr-643 the chain carries Phosphotyrosine. At Thr-692 the chain carries Phosphothreonine. The region spanning Gln-707–Lys-865 is the PH domain. Residues His-892–Ile-1019 enclose the C2 domain. Residues Val-1053 to Tyr-1247 enclose the Rho-GAP domain. Ser-1263 carries the phosphoserine modification.

As to quaternary structure, homotetramer. Interacts with PDZK1. May interact with CCPG1. Interacts with HCK, FES/FPS, ABL1, PIK3R1 and GRB2. Interacts with SH2D5. Interacts with DLG4. In terms of processing, autophosphorylated. Phosphorylated by FES/FPS on tyrosine residues, leading to down-regulation of the BCR kinase activity. Phosphorylation by HCK is important for interaction with GRB2. In terms of tissue distribution, expressed in brain, including the cortex, hippocampus, cerebellum, and brainstem, as well as the spinal cord (at protein level).

The protein resides in the postsynaptic density. It is found in the cell projection. Its subcellular location is the dendritic spine. The protein localises to the axon. It localises to the synapse. The enzyme catalyses L-seryl-[protein] + ATP = O-phospho-L-seryl-[protein] + ADP + H(+). The catalysed reaction is L-threonyl-[protein] + ATP = O-phospho-L-threonyl-[protein] + ADP + H(+). Protein with a unique structure having two opposing regulatory activities toward small GTP-binding proteins. The C-terminus is a GTPase-activating protein (GAP) domain which stimulates GTP hydrolysis by RAC1, RAC2 and CDC42. Accelerates the intrinsic rate of GTP hydrolysis of RAC1 or CDC42, leading to down-regulation of the active GTP-bound form. The central Dbl homology (DH) domain functions as guanine nucleotide exchange factor (GEF) that modulates the GTPases CDC42, RHOA and RAC1. Promotes the conversion of CDC42, RHOA and RAC1 from the GDP-bound to the GTP-bound form. The amino terminus contains an intrinsic kinase activity. Functions as an important negative regulator of neuronal RAC1 activity. Regulates macrophage functions such as CSF1-directed motility and phagocytosis through the modulation of RAC1 activity. Plays a major role as a RHOA GEF in keratinocytes being involved in focal adhesion formation and keratinocyte differentiation. The sequence is that of Breakpoint cluster region protein from Rattus norvegicus (Rat).